The sequence spans 870 residues: Valine--tRNA ligase (870 aa).

Over residues 1–13 the composition is skewed to polar residues; the sequence is MTSQTFTTSSATP. Residues 1 to 21 form a disordered region; it reads MTSQTFTTSSATPPTRGVVPD. The 'HIGH' region motif lies at 63 to 73; the sequence is PTVSGHLHPGH. The disordered stretch occupies residues 479-505; the sequence is YDHPLLPDESALPVDPASQPPSGYQES. Residues 595 to 599 carry the 'KMSKS' region motif; it reads KMSKS. Lys-598 is a binding site for ATP.

This sequence belongs to the class-I aminoacyl-tRNA synthetase family. ValS type 2 subfamily. As to quaternary structure, monomer.

The protein resides in the cytoplasm. The catalysed reaction is tRNA(Val) + L-valine + ATP = L-valyl-tRNA(Val) + AMP + diphosphate. Its function is as follows. Catalyzes the attachment of valine to tRNA(Val). As ValRS can inadvertently accommodate and process structurally similar amino acids such as threonine, to avoid such errors, it has a 'posttransfer' editing activity that hydrolyzes mischarged Thr-tRNA(Val) in a tRNA-dependent manner. This Cutibacterium acnes (strain DSM 16379 / KPA171202) (Propionibacterium acnes) protein is Valine--tRNA ligase.